Consider the following 1463-residue polypeptide: Regulating synaptic membrane exocytosis protein 1 (1463 aa).

Residues 1–26 (MSSAVGPRGPRPPTVPPPMQELPDLS) form a disordered region. Residues 9–20 (GPRPPTVPPPMQ) show a composition bias toward pro residues. The region spanning 22-205 (LPDLSHLTEE…TKSGAWFFGS (184 aa)) is the RabBD domain. The segment at 133–193 (KDDAPTCGIC…VCNLCRKQQE (61 aa)) adopts an FYVE-type zinc-finger fold. Positions 139, 142, 155, 158, 163, 166, 185, and 188 each coordinate Zn(2+). Positions 205 to 393 (SGPQQPSQDG…DVELESESVS (189 aa)) are disordered. Residues 206–222 (GPQQPSQDGTLSDTATG) show a composition bias toward polar residues. Residues 227–240 (VPREKKARLQERSR) show a composition bias toward basic and acidic residues. Residues 241-256 (SQTPLSTAAVSSQDTA) are compositionally biased toward polar residues. Over residues 327–372 (ADERERKERRETRRLEKGRSQDYPDRLEKREDGRVAEDEKQRKEEE) the composition is skewed to basic and acidic residues. Over residues 381-391 (SCEDVELESES) the composition is skewed to acidic residues. Serine 413 is subject to Phosphoserine. In terms of domain architecture, PDZ spans 440-526 (RTTMPKESGA…EPQVEIIVSR (87 aa)). The tract at residues 533–567 (RIPESSHPPLESSSSSFESQKMERPSISVISPTSP) is disordered. The span at 535–551 (PESSHPPLESSSSSFES) shows a compositional bias: low complexity. Phosphoserine is present on residues serine 563 and serine 566. Residues 577–700 (LPGQLSVKLW…ALLDDEPHWY (124 aa)) form the C2 1 domain. The disordered stretch occupies residues 705–856 (HDESSLPLPQ…YSSEPDSELL (152 aa)). Serine 716 is subject to Phosphoserine. A compositionally biased stretch (polar residues) spans 770 to 779 (ATTLTVPEQQ). Serine 812 carries the phosphoserine modification. Residues 827-844 (RHHDASRSLADHRSRHAE) show a composition bias toward basic and acidic residues. Serine 866 carries the phosphoserine modification. A disordered region spans residues 874-1049 (SELQPSLDRA…RQLPQVPVRS (176 aa)). Residues 928–941 (PENDRHSRKSERSS) show a composition bias toward basic and acidic residues. Residues 1021–1035 (QGSPTQSPPADTSFG) show a composition bias toward polar residues. At serine 1023 the chain carries Phosphoserine. At threonine 1025 the chain carries Phosphothreonine. A phosphoserine mark is found at serine 1027, serine 1079, serine 1081, serine 1082, serine 1110, serine 1111, and serine 1113. The tract at residues 1104–1161 (DNASAKSSDSDVSDVSAISRASSTSRLSSTSFMSEQSERPRGRISSFTPKMQGRRMGT) is disordered. The span at 1116–1137 (SDVSAISRASSTSRLSSTSFMS) shows a compositional bias: low complexity. Residue serine 1187 is modified to Phosphoserine. The disordered stretch occupies residues 1216-1266 (RSRSTSQLSQTESGHKKLKSTIQRSTETGMAAEMRKMVRQPSRESTDGSIN). The span at 1248 to 1261 (EMRKMVRQPSREST) shows a compositional bias: basic and acidic residues. The C2 2 domain occupies 1309–1427 (AMGDIQIGME…DLSSMVIGWY (119 aa)). Serine 1448, serine 1451, serine 1454, and serine 1463 each carry phosphoserine.

In terms of assembly, binds SNAP25, SYT1 and CACNA1B. Interaction with SYT1 is enhanced by calcium ions. Interaction with SNAP25 is weaker in the presence of calcium ions. Interacts with TSPOAP1 and RIMBP2; interacts with PPFIA3 and PPFIA4. Interacts with ERC1. Interacts with RAB3A, RAB3B and RAB3D that have been activated by GTP-binding. Interacts with RAB3C, RAB10, RAB26 and RAB37. Binds UNC13A. In terms of processing, phosphorylated by BRSK1.

The protein localises to the cell membrane. Its subcellular location is the synapse. The protein resides in the presynaptic cell membrane. Rab effector involved in exocytosis. May act as scaffold protein that regulates neurotransmitter release at the active zone. Essential for maintaining normal probability of neurotransmitter release and for regulating release during short-term synaptic plasticity. Plays a role in dendrite formation by melanocytes. The protein is Regulating synaptic membrane exocytosis protein 1 (Rims1) of Mus musculus (Mouse).